Reading from the N-terminus, the 346-residue chain is Holliday junction branch migration complex subunit RuvB (346 aa).

The segment at 1–182 is large ATPase domain (RuvB-L); the sequence is MSERLVTSNE…LGVLCSMEYY (182 aa). Residues Leu21, Arg22, Gly63, Lys66, Thr67, Thr68, 129-131, Arg172, Tyr182, and Arg219 each bind ATP; that span reads EDY. A Mg(2+)-binding site is contributed by Thr67. Residues 183–253 form a small ATPAse domain (RuvB-S) region; that stretch reads TDEQLKEIII…AAKKSLEILE (71 aa). The head domain (RuvB-H) stretch occupies residues 256 to 346; it reads GEGFDRIDNK…DSKQCTLFEK (91 aa). DNA is bound by residues Arg311 and Arg316.

It belongs to the RuvB family. As to quaternary structure, homohexamer. Forms an RuvA(8)-RuvB(12)-Holliday junction (HJ) complex. HJ DNA is sandwiched between 2 RuvA tetramers; dsDNA enters through RuvA and exits via RuvB. An RuvB hexamer assembles on each DNA strand where it exits the tetramer. Each RuvB hexamer is contacted by two RuvA subunits (via domain III) on 2 adjacent RuvB subunits; this complex drives branch migration. In the full resolvosome a probable DNA-RuvA(4)-RuvB(12)-RuvC(2) complex forms which resolves the HJ.

It localises to the cytoplasm. It carries out the reaction ATP + H2O = ADP + phosphate + H(+). In terms of biological role, the RuvA-RuvB-RuvC complex processes Holliday junction (HJ) DNA during genetic recombination and DNA repair, while the RuvA-RuvB complex plays an important role in the rescue of blocked DNA replication forks via replication fork reversal (RFR). RuvA specifically binds to HJ cruciform DNA, conferring on it an open structure. The RuvB hexamer acts as an ATP-dependent pump, pulling dsDNA into and through the RuvAB complex. RuvB forms 2 homohexamers on either side of HJ DNA bound by 1 or 2 RuvA tetramers; 4 subunits per hexamer contact DNA at a time. Coordinated motions by a converter formed by DNA-disengaged RuvB subunits stimulates ATP hydrolysis and nucleotide exchange. Immobilization of the converter enables RuvB to convert the ATP-contained energy into a lever motion, pulling 2 nucleotides of DNA out of the RuvA tetramer per ATP hydrolyzed, thus driving DNA branch migration. The RuvB motors rotate together with the DNA substrate, which together with the progressing nucleotide cycle form the mechanistic basis for DNA recombination by continuous HJ branch migration. Branch migration allows RuvC to scan DNA until it finds its consensus sequence, where it cleaves and resolves cruciform DNA. This is Holliday junction branch migration complex subunit RuvB from Clostridium perfringens (strain 13 / Type A).